Reading from the N-terminus, the 119-residue chain is Protein TusC (119 aa).

The protein belongs to the DsrF/TusC family. In terms of assembly, heterohexamer, formed by a dimer of trimers. The hexameric TusBCD complex contains 2 copies each of TusB, TusC and TusD. The TusBCD complex interacts with TusE.

It localises to the cytoplasm. Part of a sulfur-relay system required for 2-thiolation of 5-methylaminomethyl-2-thiouridine (mnm(5)s(2)U) at tRNA wobble positions. The chain is Protein TusC from Shigella dysenteriae serotype 1 (strain Sd197).